Here is a 304-residue protein sequence, read N- to C-terminus: UDP-3-O-acyl-N-acetylglucosamine deacetylase (304 aa).

Zn(2+) is bound by residues histidine 79, histidine 238, and aspartate 242. Histidine 265 (proton donor) is an active-site residue.

It belongs to the LpxC family. Zn(2+) serves as cofactor.

The enzyme catalyses a UDP-3-O-[(3R)-3-hydroxyacyl]-N-acetyl-alpha-D-glucosamine + H2O = a UDP-3-O-[(3R)-3-hydroxyacyl]-alpha-D-glucosamine + acetate. The protein operates within glycolipid biosynthesis; lipid IV(A) biosynthesis; lipid IV(A) from (3R)-3-hydroxytetradecanoyl-[acyl-carrier-protein] and UDP-N-acetyl-alpha-D-glucosamine: step 2/6. Catalyzes the hydrolysis of UDP-3-O-myristoyl-N-acetylglucosamine to form UDP-3-O-myristoylglucosamine and acetate, the committed step in lipid A biosynthesis. This chain is UDP-3-O-acyl-N-acetylglucosamine deacetylase, found in Laribacter hongkongensis (strain HLHK9).